The chain runs to 275 residues: MGFLKGKKGLIVGVANNKSIAYGIAQSCFNQGATLAFTYLNESLEKRVRPIAQELNSPYVYELDVSKEEHFKSLYNSVKKDLGSLDFIVHSVAFAPKEALEGSLLETSKSAFNTAMEISVYSLIELTNTLKPLLNNGASVLTLSYLGSTKYMAHYNVMGLAKAALESAVRYLAVDLGKHHIRVNALSAGPIRTLASSGIADFRMILKWNEINAPLRKNVSLEEVGNAGMYLLSSLSSGVSGEVHFVDAGYHVMGMGAVEEKDNKATLLWDLHKEQ.

Residues glycine 13, 19 to 20, 64 to 65, and valine 92 each bind NAD(+); these read SI and DV. Alanine 95 contributes to the substrate binding site. Catalysis depends on proton acceptor residues tyrosine 145 and tyrosine 155. NAD(+)-binding positions include lysine 162 and 191–195; that span reads IRTLA.

The protein belongs to the short-chain dehydrogenases/reductases (SDR) family. FabI subfamily. As to quaternary structure, homotetramer.

The catalysed reaction is a 2,3-saturated acyl-[ACP] + NAD(+) = a (2E)-enoyl-[ACP] + NADH + H(+). Its pathway is lipid metabolism; fatty acid biosynthesis. Its function is as follows. Catalyzes the reduction of a carbon-carbon double bond in an enoyl moiety that is covalently linked to an acyl carrier protein (ACP). Involved in the elongation cycle of fatty acid which are used in the lipid metabolism. The polypeptide is Enoyl-[acyl-carrier-protein] reductase [NADH] FabI (fabI) (Helicobacter pylori (strain ATCC 700392 / 26695) (Campylobacter pylori)).